The following is a 370-amino-acid chain: MNKSETIAVAMSGGVDSSTVAAMLRAEGYNLVGLTMQLWNQRRLAHHEGFGEPGVGRCCSLDDVYDARRVAETLAIPYYVVNQEDRFERDVVKPFVEDYLSGRTPIPCSLCNNHLKFDQLLRTAQQIGAEKIATGHYARNDFNAQTGRWELKRPADRAKDQTYFLFGLTQEQLSRTLFPLGHKTKPEVREDAKNHGLKLFEKPDSQEICFIPNGDYKKFLDAYLEEQGESLPDTSGELVTSSGEVVGHHTGIHNFTVGQRKGLGVATGSPLYVIELRGDKRQVVVGNNDELLTRNLRAKRMNWIAVSDLAQPMRVHAKIRHKHEPAWATIEKTGDDEVLVTFDDPQRAVTPGQAVVLYDGDVVVGGGWIC.

ATP-binding positions include 10–17 (AMSGGVDS) and Met-36. Cys-111 serves as the catalytic Nucleophile. Cys-111 and Cys-209 are oxidised to a cystine. An ATP-binding site is contributed by Gly-135. The tract at residues 159–161 (KDQ) is interaction with tRNA. Cys-209 functions as the Cysteine persulfide intermediate in the catalytic mechanism.

This sequence belongs to the MnmA/TRMU family.

The protein localises to the cytoplasm. The catalysed reaction is S-sulfanyl-L-cysteinyl-[protein] + uridine(34) in tRNA + AH2 + ATP = 2-thiouridine(34) in tRNA + L-cysteinyl-[protein] + A + AMP + diphosphate + H(+). Its function is as follows. Catalyzes the 2-thiolation of uridine at the wobble position (U34) of tRNA, leading to the formation of s(2)U34. This is tRNA-specific 2-thiouridylase MnmA from Koribacter versatilis (strain Ellin345).